The primary structure comprises 501 residues: Atypical kinase COQ8, mitochondrial (501 aa).

A mitochondrion-targeting transit peptide spans 1–29; sequence MVTNMVKLRNLRRLYCSSRLLRTIQNGRI. The interval 41-69 is disordered; sequence YTTKSAKEGEENVERKHEEEKKDTLKSSS. A compositionally biased stretch (basic and acidic residues) spans 45–65; the sequence is SAKEGEENVERKHEEEKKDTL. The short motif at 134-137 is the KxGQ motif element; sequence KIGQ. The region spanning 188–501 is the Protein kinase domain; that stretch reads KFDKIPMAAA…LFKEIFAYKV (314 aa). Residues 195-198 carry the AAAS motif motif; it reads AAAS. Residues S198, K216, and 303 to 306 contribute to the ATP site; that span reads MTRM. Catalysis depends on D346, which acts as the Proton acceptor. 2 residues coordinate ATP: N351 and D365.

This sequence belongs to the protein kinase superfamily. ADCK protein kinase family. Forms homopolymers. Predominantly associated with a complex of about 500 kDa.

It is found in the mitochondrion inner membrane. It functions in the pathway cofactor biosynthesis; ubiquinone biosynthesis. Atypical kinase involved in the biosynthesis of coenzyme Q, also named ubiquinone, an essential lipid-soluble electron transporter for aerobic cellular respiration. Its substrate specificity is still unclear: may act as a protein kinase that mediates phosphorylation of COQ3, COQ5 and/or COQ7. According to other reports, acts as a small molecule kinase, possibly a lipid kinase that phosphorylates a prenyl lipid in the ubiquinone biosynthesis pathway, as suggested by its ability to bind coenzyme Q lipid intermediates. This chain is Atypical kinase COQ8, mitochondrial (COQ8), found in Saccharomyces cerevisiae (strain ATCC 204508 / S288c) (Baker's yeast).